We begin with the raw amino-acid sequence, 358 residues long: ATP synthase gamma chain, chloroplastic (358 aa).

Residues 1 to 35 constitute a chloroplast transit peptide; sequence MAAMLASKQGAFMGRSSFAPAPKGVASRGSLQVVA. C123 is a catalytic residue. C233 and C239 are disulfide-bonded.

Belongs to the ATPase gamma chain family. As to quaternary structure, F-type ATPases have 2 components, F(1) - the catalytic core - and F(0) - the membrane proton channel. F(1) has five subunits: alpha(3), beta(3), gamma(1), delta(1), epsilon(1). F(0) has four main subunits: a(1), b(1), b'(1) and c(10-14). The alpha and beta chains form an alternating ring which encloses part of the gamma chain. F(1) is attached to F(0) by a central stalk formed by the gamma and epsilon chains, while a peripheral stalk is formed by the delta, b and b' chains.

It localises to the plastid. The protein resides in the chloroplast thylakoid membrane. Functionally, f(1)F(0) ATP synthase produces ATP from ADP in the presence of a proton or sodium gradient. F-type ATPases consist of two structural domains, F(1) containing the extramembraneous catalytic core and F(0) containing the membrane proton channel, linked together by a central stalk and a peripheral stalk. During catalysis, ATP synthesis in the catalytic domain of F(1) is coupled via a rotary mechanism of the central stalk subunits to proton translocation. Its function is as follows. Produces ATP from ADP in the presence of a proton gradient across the membrane. The gamma chain is believed to be important in regulating ATPase activity and the flow of protons through the CF(0) complex. This Chlamydomonas reinhardtii (Chlamydomonas smithii) protein is ATP synthase gamma chain, chloroplastic.